Reading from the N-terminus, the 358-residue chain is WD repeat-containing protein 53 (358 aa).

5 WD repeats span residues Gly8–Gln47, Val92–Ser131, Arg134–Ile174, Leu195–Glu234, and Gly239–Gln278. The tract at residues Lys288 to Asp309 is disordered.

The protein belongs to the WD repeat WDR53 family.

The chain is WD repeat-containing protein 53 (Wdr53) from Mus musculus (Mouse).